We begin with the raw amino-acid sequence, 635 residues long: Putative adagio-like protein 2 (635 aa).

Residues 1–25 are compositionally biased toward acidic residues; it reads MEWDSDSEGSGDEEEEEEEEEEEGV. Residues 1 to 32 form a disordered region; the sequence is MEWDSDSEGSGDEEEEEEEEEEEGVEVGGGGD. Residues 44-123 form the PAS domain; it reads ALAIEGVLGA…TDIRRCLEEG (80 aa). C91 carries the post-translational modification S-4a-FMN cysteine. Residues 209-255 enclose the F-box domain; it reads SDLFLLSDEVLCQKILSRLSPRDIASVNSVCKRLYHLTRNDDLWRMV. Kelch repeat units lie at residues 371–421, 423–474, 476–530, and 542–594; these read RLVL…TLDG, KLVV…VYDG, KILM…PPPR, and RILI…VVGG.

It belongs to the ADAGIO family. In terms of processing, FMN binds covalently to cysteine after exposure to blue light and is reversed in the dark.

It localises to the nucleus. The protein operates within protein modification; protein ubiquitination. Functionally, component of an E3 ubiquitin ligase complex that plays a central role in blue light-dependent circadian cycles. Acts as a blue light photoreceptor, due to the presence of FMN, that mediates light-regulated protein degradation of critical clock components by targeting them to the proteasome complex. This Oryza sativa subsp. japonica (Rice) protein is Putative adagio-like protein 2.